The sequence spans 426 residues: Citrate transporter (426 aa).

12 helical membrane-spanning segments follow: residues 1–21 (MLAILGFVMMIVFMYLIMSNR), 22–42 (LSALIALIVVPIVFALISGFG), 59–79 (TGIMLLFAILYFGIMIDSGLF), 86–106 (ILSFVKGDPLKIAVGTAVLTM), 137–157 (LVLAGIAMLGSGVMNIIPWGG), 176–196 (PLIPAMIAGILWVIAVAYILG), 232–252 (LLTVALMAALITSLLPLPVLF), 278–298 (AGNALNVVSMVFAAGIFTGIL), 318–338 (AMGPHLPLITAIVSMPFTFFM), 343–363 (FYFGVLPIIAEAASAYGIDAA), 377–397 (LLSPLVPSTYLLVGMAGVSFG), and 406–426 (WAVGTTIVMTIAALLIGIISF).

The protein belongs to the CitM (TC 2.A.11) transporter family.

The protein resides in the cell membrane. Its function is as follows. Transports the free citrate anion. Probably cotransports citrate and at least three or four protons. The citrate uptake is inhibited by the presence of magnesium ions. The sequence is that of Citrate transporter (citN) from Bacillus subtilis (strain 168).